Consider the following 349-residue polypeptide: Hydrophobic dipeptide epimerase (349 aa).

Residues Thr127 and 153 to 155 (KIK) each bind substrate. 3 residues coordinate Mg(2+): Asp186, Glu212, and Asp237. Residues Lys259 and 309-311 (DLD) contribute to the substrate site.

The protein belongs to the mandelate racemase/muconate lactonizing enzyme family. Mg(2+) serves as cofactor.

Catalyzes the epimerization a variety of hydrophobic dipeptides. Epimerase activity is highest with L-Ala-L-Tyr, and lower with L-Ala-L-Met, L-Ala-L-Phe, L-Tyr-L-Ala, L-Tyr-L-Met and L-Tyr-L-Trp (in vitro). This is Hydrophobic dipeptide epimerase from Flavobacteria bacterium (strain MS024-2A).